The chain runs to 561 residues: MADNYRSRIVTQGTQRSPNRAMLRAVGFGDEDFSKPIIGIANGFSTITPCNMGINDLAMRAEAATRLAGGMPQLFGTITISDGISMGTEGMKYSLVSREVIADSIETVCNGQSLDGVLAIGGCDKNMPGAMIAMARMNIPAIFVYGGTIKPGRYKDCDLTVVSSFEAVGQYSAGKISEEDLIGIERNACPGAGSCGGMFTANTMSSIFEAMGMSLPYSSTMAAEDAEKADSTEESAKVLVEAVRKQILPSQILTRKAFENAISVIMAVGGSTNAVLHLLAISRTIGVELSIDDFETIRQRVPVICDLKPSGRYVTVDLHKAGGIPQVMKILLVNGLLHGDALTISGQTIAEILADIPDQPPSGQDVIRPFSNPVYKEGHLAILKGNLATEGAVAKISGVKTPVITGPARVFESEETCLEAILAGKIQAGDVVVVRYEGPVGGPGMREMLAPTSAIIGAGLGDSVGLITDGRFSGGTYGMVVGHVAPEAAVGGTIALVEEGDQITIDARQRLLSLNVSEEELTRRRNHWQPRPPRYKTGILGKFAKLVSSSSLGALTDLNLF.

Residue Cys50 participates in [2Fe-2S] cluster binding. Asp82 provides a ligand contact to Mg(2+). [2Fe-2S] cluster is bound at residue Cys123. The Mg(2+) site is built by Asp124 and Lys125. Lys125 bears the N6-carboxylysine mark. Residue Cys195 participates in [2Fe-2S] cluster binding. Glu447 lines the Mg(2+) pocket. Ser473 functions as the Proton acceptor in the catalytic mechanism.

The protein belongs to the IlvD/Edd family. As to quaternary structure, homodimer. [2Fe-2S] cluster is required as a cofactor. The cofactor is Mg(2+).

It carries out the reaction (2R)-2,3-dihydroxy-3-methylbutanoate = 3-methyl-2-oxobutanoate + H2O. It catalyses the reaction (2R,3R)-2,3-dihydroxy-3-methylpentanoate = (S)-3-methyl-2-oxopentanoate + H2O. The protein operates within amino-acid biosynthesis; L-isoleucine biosynthesis; L-isoleucine from 2-oxobutanoate: step 3/4. It participates in amino-acid biosynthesis; L-valine biosynthesis; L-valine from pyruvate: step 3/4. Functionally, functions in the biosynthesis of branched-chain amino acids. Catalyzes the dehydration of (2R,3R)-2,3-dihydroxy-3-methylpentanoate (2,3-dihydroxy-3-methylvalerate) into 2-oxo-3-methylpentanoate (2-oxo-3-methylvalerate) and of (2R)-2,3-dihydroxy-3-methylbutanoate (2,3-dihydroxyisovalerate) into 2-oxo-3-methylbutanoate (2-oxoisovalerate), the penultimate precursor to L-isoleucine and L-valine, respectively. This is Dihydroxy-acid dehydratase from Microcystis aeruginosa (strain NIES-843 / IAM M-2473).